A 313-amino-acid polypeptide reads, in one-letter code: Ribosomal RNA small subunit methyltransferase H (313 aa).

S-adenosyl-L-methionine is bound by residues 35–37 (GGH), aspartate 55, phenylalanine 79, aspartate 100, and glutamine 107.

The protein belongs to the methyltransferase superfamily. RsmH family.

It localises to the cytoplasm. The enzyme catalyses cytidine(1402) in 16S rRNA + S-adenosyl-L-methionine = N(4)-methylcytidine(1402) in 16S rRNA + S-adenosyl-L-homocysteine + H(+). In terms of biological role, specifically methylates the N4 position of cytidine in position 1402 (C1402) of 16S rRNA. This Burkholderia vietnamiensis (strain G4 / LMG 22486) (Burkholderia cepacia (strain R1808)) protein is Ribosomal RNA small subunit methyltransferase H.